Here is a 418-residue protein sequence, read N- to C-terminus: MNPASGLPAVVIDNGTGYTKMGYAGNNDPSFIIPTTIATQSSKGKQTAASQKKGVEDLDFFIGDEAIANSKTYDMTNPVKHGQIENWTHMEQYWEHCVFKYLRCEPEDHYFLLTEPPLNAPENREFTAEIMFETFNVPGLYIAVQAVLALAASWTSKNAEKTLTGTVIDSGDGVTHVIPISEGYVIGSSIKHIPIAGRDISSYVQQIMREREPNIPPAESLEIAKRVKEQYSYVCPDIVKEFGKYDSEPDKWIKTINAQDSVTKKPFSYDVGYERFLGPELFFNPEIASSDYLTPLPKVVDDTIQSCPIDCRRGLYKNIVLSGGSTMFKDFGKRLQRDVKRSVDYRIKRSEELSGGKIKAVPLAVNVISHNMQRYAVWFGGSMLASTPEFYNVCHTKAQYDEIGPSICRFNTVIGGIN.

M1 carries the N-acetylmethionine modification.

It belongs to the actin family. ARP3 subfamily. As to quaternary structure, component of the Arp2/3 complex composed of arpB/Arp2, arpC/Arp3, arcA/p41-arc, arcB/p34-arc, arcC/p21-arc, arcD/p20-arc and arcE/p16-arc. Interacts with carmil (via the region between the LRR domain and COOH-terminal proline-rich domain); carmil is required for Arp2/3-dependent actin nucleation. Arp2/3 complex, MyoB, MyoC, and the alpha and beta subunits of capping protein all form a larger complex with carmil.

It is found in the cytoplasm. Its subcellular location is the cytoskeleton. The protein resides in the cytosol. It localises to the cell cortex. The protein localises to the cell projection. It is found in the pseudopodium. Functions as ATP-binding component of the Arp2/3 complex which is involved in regulation of actin polymerization and together with an activating nucleation-promoting factor (NPF) mediates the formation of branched actin networks. Seems to contact the pointed end of the daughter actin filament. The Arp2/3 complex is involved in organizing the actin system in cell motility and chemotaxis, in phagocytosis and macropinocytosis, at late steps of endosome processing, and in mitosis. In concert with a group of other proteins, the Arp2/3 complex plays a general role in the rapid activation and adaptation of the actin system to its multiple functions. This chain is Actin-related protein 3 (arpC), found in Dictyostelium discoideum (Social amoeba).